We begin with the raw amino-acid sequence, 296 residues long: ATP synthase gamma chain (296 aa).

The protein belongs to the ATPase gamma chain family. In terms of assembly, F-type ATPases have 2 components, CF(1) - the catalytic core - and CF(0) - the membrane proton channel. CF(1) has five subunits: alpha(3), beta(3), gamma(1), delta(1), epsilon(1). CF(0) has three main subunits: a, b and c.

Its subcellular location is the cell inner membrane. Produces ATP from ADP in the presence of a proton gradient across the membrane. The gamma chain is believed to be important in regulating ATPase activity and the flow of protons through the CF(0) complex. This is ATP synthase gamma chain from Methylorubrum extorquens (strain CM4 / NCIMB 13688) (Methylobacterium extorquens).